Consider the following 314-residue polypeptide: Malate dehydrogenase (314 aa).

NAD(+)-binding positions include 11–16 (GSGNIG) and D35. Substrate contacts are provided by R84 and R90. NAD(+) contacts are provided by residues N97 and 120–122 (ITN). N122 and R153 together coordinate substrate. The active-site Proton acceptor is the H177.

The protein belongs to the LDH/MDH superfamily. MDH type 3 family.

It carries out the reaction (S)-malate + NAD(+) = oxaloacetate + NADH + H(+). In terms of biological role, catalyzes the reversible oxidation of malate to oxaloacetate. The protein is Malate dehydrogenase of Rickettsia rickettsii (strain Iowa).